The sequence spans 500 residues: Oryzalexin D synthase (500 aa).

The helical transmembrane segment at 4–24 threads the bilayer; sequence SQMWLLWGALSVALFFYFSTL. Cys442 is a heme binding site.

It belongs to the cytochrome P450 family. Requires heme as cofactor.

The protein resides in the membrane. The catalysed reaction is ent-cassa-12,15-diene + reduced [NADPH--hemoprotein reductase] + O2 = ent-11beta-hydroxycassa-12,15-diene + oxidized [NADPH--hemoprotein reductase] + H2O + H(+). It catalyses the reaction ent-sandaracopimaradien-3beta-ol + reduced [NADPH--hemoprotein reductase] + O2 = oryzalexin D + oxidized [NADPH--hemoprotein reductase] + H2O + H(+). Functionally, enzyme of the diterpenoid metabolism involved in the biosynthesis of both phytocassane and the oryzalexin class of phytoalexins. Can hydroxylate syn-pimaradiene, ent-pimaradiene, ent-sandaracopimaradiene, ent-isokaurene, ent-kaurene, and ent-cassadiene, but no activity with syn-stemodene, syn-stemarene, syn-labdatriene, C11-alpha-hydroxy-ent-cassadiene or syn-pimadien-19-oic acid as substrates. Hydroxylates 3-alpha-hydroxy-ent-sandaracopimaradiene at C-7-beta, resulting in a 3-alpha,7-beta-diol corresponding to oryzalexins D. This chain is Oryzalexin D synthase, found in Oryza sativa subsp. japonica (Rice).